The primary structure comprises 192 residues: Lipid A acyltransferase PagP (192 aa).

Positions 1 to 26 are cleaved as a signal peptide; the sequence is MTVVNKSFLTILIFFCQILFPLNASA. Active-site residues include His-64, Asp-107, and Ser-108.

Belongs to the lipid A palmitoyltransferase family. As to quaternary structure, homodimer.

Its subcellular location is the cell outer membrane. It catalyses the reaction a lipid A + a 1,2-diacyl-sn-glycero-3-phosphocholine = a hepta-acyl lipid A + a 2-acyl-sn-glycero-3-phosphocholine. The catalysed reaction is a lipid IVA + a 1,2-diacyl-sn-glycero-3-phosphocholine = a lipid IVB + a 2-acyl-sn-glycero-3-phosphocholine. The enzyme catalyses a lipid IIA + a 1,2-diacyl-sn-glycero-3-phosphocholine = a lipid IIB + a 2-acyl-sn-glycero-3-phosphocholine. Its function is as follows. Transfers a fatty acid residue from the sn-1 position of a phospholipid to the N-linked hydroxyfatty acid chain on the proximal unit of lipid A or its precursors. In Cronobacter sakazakii (strain ATCC BAA-894) (Enterobacter sakazakii), this protein is Lipid A acyltransferase PagP.